Here is a 1228-residue protein sequence, read N- to C-terminus: P3N-PIPO polyprotein (1228 aa).

The Peptidase S30 domain occupies 408-547; the sequence is IVGNSKINYI…RSVYAKMDQY (140 aa). Catalysis depends on for P1 proteinase activity residues His-456, Asp-465, and Ser-499. Positions 598–601 match the Involved in interaction with stylet and aphid transmission motif; that stretch reads KITC. The short motif at 856–858 is the Involved in virions binding and aphid transmission element; sequence PTK. One can recognise a Peptidase C6 domain in the interval 882–1004; that stretch reads MYIAKKGYCY…DSEMKHYIVG (123 aa). Residues Cys-890 and His-963 each act as for helper component proteinase activity in the active site.

This sequence belongs to the potyviridae P3N-PIPO polyprotein family. In terms of assembly, interacts (via PIPO domain) with host PCaP1 protein; this interaction may help to anchor the movement complex to the plasma membrane from which the complex could move to the plasmodesmata. In terms of processing, potyviral RNA is expressed as two polyproteins which undergo post-translational proteolytic processing. Genome polyprotein is processed by NIa-pro, P1 and HC-pro proteinases resulting in the production of at least ten individual proteins. P3N-PIPO is cleaved by P1 and HC-pro proteinases resulting in the production of three individual proteins. The P1 proteinase and the HC-pro cleave only their respective C-termini autocatalytically.

Its subcellular location is the host cell junction. The protein resides in the host plasmodesma. The catalysed reaction is Hydrolyzes a Gly-|-Gly bond at its own C-terminus, commonly in the sequence -Tyr-Xaa-Val-Gly-|-Gly, in the processing of the potyviral polyprotein.. In terms of biological role, required for aphid transmission and also has proteolytic activity. Only cleaves a Gly-Gly dipeptide at its own C-terminus. Interacts with virions and aphid stylets. Acts as a suppressor of RNA-mediated gene silencing, also known as post-transcriptional gene silencing (PTGS), a mechanism of plant viral defense that limits the accumulation of viral RNAs. May have RNA-binding activity. Allows efficient cell to cell propagation, by bypassing the host cell wall barrier. Transports viral genome to neighboring plant cells directly through plasmosdesmata, without any budding. The sequence is that of P3N-PIPO polyprotein from Carica papaya (Papaya).